Reading from the N-terminus, the 706-residue chain is uncharacterized protein (706 aa).

3 coiled-coil regions span residues 86–162 (TKNV…AKKI), 269–299 (DYLK…VNEL), and 337–427 (DDYI…QSDY).

This is an uncharacterized protein from Staphylococcus aureus (strain MRSA252).